Consider the following 144-residue polypeptide: Protein SprT-like (144 aa).

Positions 4 to 143 (NKYVQEVSLQ…GKCRGKLTLK (140 aa)) constitute a SprT-like domain. Position 64 (His64) interacts with Zn(2+). Glu65 is an active-site residue. His68 serves as a coordination point for Zn(2+).

Belongs to the SprT family. Zn(2+) serves as cofactor.

The protein localises to the cytoplasm. The protein is Protein SprT-like of Streptococcus suis (strain 98HAH33).